The chain runs to 199 residues: Altered inheritance of mitochondria protein 11 (199 aa).

The next 2 membrane-spanning stretches (helical) occupy residues 79-101 (MALFYGFTVATFICSKIAYRGVI) and 129-151 (VFHSTSLAITSLGMASTGVLWYY).

Belongs to the AIM11 family.

It is found in the membrane. The chain is Altered inheritance of mitochondria protein 11 (AIM11) from Komagataella phaffii (strain GS115 / ATCC 20864) (Yeast).